Reading from the N-terminus, the 167-residue chain is Large ribosomal subunit protein uL10 (167 aa).

It belongs to the universal ribosomal protein uL10 family. Part of the ribosomal stalk of the 50S ribosomal subunit. The N-terminus interacts with L11 and the large rRNA to form the base of the stalk. The C-terminus forms an elongated spine to which L12 dimers bind in a sequential fashion forming a multimeric L10(L12)X complex.

Its function is as follows. Forms part of the ribosomal stalk, playing a central role in the interaction of the ribosome with GTP-bound translation factors. The chain is Large ribosomal subunit protein uL10 from Cytophaga hutchinsonii (strain ATCC 33406 / DSM 1761 / CIP 103989 / NBRC 15051 / NCIMB 9469 / D465).